A 133-amino-acid chain; its full sequence is Core atranone cluster (CAC) protein 11 (133 aa).

It functions in the pathway mycotoxin biosynthesis. In terms of biological role, part of the core atranone cluster (CAC) which products are predicted to catalyze most or all steps of mycotoxin atranone synthesis, starting from geranylgeranyl pyrophosphate (GGPP). The initial cyclization of GGPP to dolabellane is probably performed by the terpene cyclase ATR13. The Baeyer-Villiger oxidation near the end of the atranone synthesis, which converts atranones D and E to atranones F and G is predicted to be catalyzed by the monooxygenase ATR8. Of the CAC's other predicted gene products, the reducing PKS ATR6 might synthesize a polyketide chain. This polyketide is probably transferred onto the atranone backbone by the polyketide transferase ATR5. Other predicted CAC products include 4 oxygenases (ATR2, ATR3, ATR4, and ATR14), 3 short-chain reductases (ATR7, ATR9, and ATR10), and a methyltransferase (ATR12). These may all be involved in the various steps of atranone biosynthesis, although their specific roles must await experimental determination. The sequence is that of Core atranone cluster (CAC) protein 11 from Stachybotrys chlorohalonatus (strain IBT 40285).